A 250-amino-acid polypeptide reads, in one-letter code: 2,3-bisphosphoglycerate-dependent phosphoglycerate mutase (250 aa).

Substrate contacts are provided by residues arginine 10–asparagine 17, threonine 23–glycine 24, arginine 62, glutamate 89–tyrosine 92, lysine 100, arginine 116–arginine 117, and glycine 185–asparagine 186. Histidine 11 functions as the Tele-phosphohistidine intermediate in the catalytic mechanism. The active-site Proton donor/acceptor is the glutamate 89.

This sequence belongs to the phosphoglycerate mutase family. BPG-dependent PGAM subfamily. Homodimer.

It catalyses the reaction (2R)-2-phosphoglycerate = (2R)-3-phosphoglycerate. It functions in the pathway carbohydrate degradation; glycolysis; pyruvate from D-glyceraldehyde 3-phosphate: step 3/5. Catalyzes the interconversion of 2-phosphoglycerate and 3-phosphoglycerate. The sequence is that of 2,3-bisphosphoglycerate-dependent phosphoglycerate mutase from Shigella boydii serotype 4 (strain Sb227).